Reading from the N-terminus, the 229-residue chain is MQRETVWLVEDEQGIADTLVYMLQQEGFAVEVFERGLPVLDKARKQVPDVMILDVGLPDISGFELCRQLLALHPALPVLFLTARSEEVDRLLGLEIGADDYVAKPFSPREVCARVRTLLRRVKKFSTPSPVIRIGHFELNEPAAQISWFDTPLALTRYEFLLLKTLLKSPGRVWSRQQLMDSVWEDAQDTYDRTVDTHIKTLRAKLRAINPDLSPINTHRGMGYSLRGL.

Residues 5–119 (TVWLVEDEQG…EVCARVRTLL (115 aa)) form the Response regulatory domain. At Asp-54 the chain carries 4-aspartylphosphate. The ompR/PhoB-type DNA-binding region spans 129 to 228 (SPVIRIGHFE…HRGMGYSLRG (100 aa)).

In terms of processing, phosphorylated by CreC.

The protein resides in the cytoplasm. Its function is as follows. Member of the two-component regulatory system CreC/CreB involved in catabolic regulation. This chain is Transcriptional regulatory protein CreB (creB), found in Escherichia coli (strain K12).